Reading from the N-terminus, the 260-residue chain is 4-hydroxy-tetrahydrodipicolinate reductase (260 aa).

NAD(+) is bound by residues 12-17 (GFRGKM), 92-94 (GTT), and 118-121 (APNF). The active-site Proton donor/acceptor is the H148. Residue H149 participates in (S)-2,3,4,5-tetrahydrodipicolinate binding. K152 serves as the catalytic Proton donor. 158 to 159 (GT) serves as a coordination point for (S)-2,3,4,5-tetrahydrodipicolinate.

Belongs to the DapB family.

It is found in the cytoplasm. It carries out the reaction (S)-2,3,4,5-tetrahydrodipicolinate + NAD(+) + H2O = (2S,4S)-4-hydroxy-2,3,4,5-tetrahydrodipicolinate + NADH + H(+). The enzyme catalyses (S)-2,3,4,5-tetrahydrodipicolinate + NADP(+) + H2O = (2S,4S)-4-hydroxy-2,3,4,5-tetrahydrodipicolinate + NADPH + H(+). It functions in the pathway amino-acid biosynthesis; L-lysine biosynthesis via DAP pathway; (S)-tetrahydrodipicolinate from L-aspartate: step 4/4. Catalyzes the conversion of 4-hydroxy-tetrahydrodipicolinate (HTPA) to tetrahydrodipicolinate. The protein is 4-hydroxy-tetrahydrodipicolinate reductase of Lactococcus lactis subsp. cremoris (strain SK11).